An 88-amino-acid polypeptide reads, in one-letter code: MTSEVEQPTAMSEALGYEQARDELIEVVRRLEAGGTTLEESLALWERGEELAEVCRRRLDGARARLDAALAEEADPEDGASGADGGGA.

Residues 69 to 88 (ALAEEADPEDGASGADGGGA) form a disordered region.

Belongs to the XseB family. As to quaternary structure, heterooligomer composed of large and small subunits.

It is found in the cytoplasm. It catalyses the reaction Exonucleolytic cleavage in either 5'- to 3'- or 3'- to 5'-direction to yield nucleoside 5'-phosphates.. Functionally, bidirectionally degrades single-stranded DNA into large acid-insoluble oligonucleotides, which are then degraded further into small acid-soluble oligonucleotides. This Streptomyces coelicolor (strain ATCC BAA-471 / A3(2) / M145) protein is Exodeoxyribonuclease 7 small subunit.